Reading from the N-terminus, the 823-residue chain is Leucine--tRNA ligase (823 aa).

A 'HIGH' region motif is present at residues 42–52; sequence PYPSGTLHMGH. Positions 575–579 match the 'KMSKS' region motif; sequence KMSKS. Lys578 is a binding site for ATP.

This sequence belongs to the class-I aminoacyl-tRNA synthetase family.

Its subcellular location is the cytoplasm. It catalyses the reaction tRNA(Leu) + L-leucine + ATP = L-leucyl-tRNA(Leu) + AMP + diphosphate. The protein is Leucine--tRNA ligase of Legionella pneumophila subsp. pneumophila (strain Philadelphia 1 / ATCC 33152 / DSM 7513).